We begin with the raw amino-acid sequence, 473 residues long: 3-isopropylmalate dehydratase large subunit (473 aa).

The [4Fe-4S] cluster site is built by C354, C414, and C417. The segment at 425 to 448 (LAPGQRSASTSNRNFEGRQGRGGR) is disordered.

The protein belongs to the aconitase/IPM isomerase family. LeuC type 1 subfamily. In terms of assembly, heterodimer of LeuC and LeuD. [4Fe-4S] cluster serves as cofactor.

The catalysed reaction is (2R,3S)-3-isopropylmalate = (2S)-2-isopropylmalate. It functions in the pathway amino-acid biosynthesis; L-leucine biosynthesis; L-leucine from 3-methyl-2-oxobutanoate: step 2/4. Catalyzes the isomerization between 2-isopropylmalate and 3-isopropylmalate, via the formation of 2-isopropylmaleate. In Acidothermus cellulolyticus (strain ATCC 43068 / DSM 8971 / 11B), this protein is 3-isopropylmalate dehydratase large subunit.